The sequence spans 235 residues: 2,3-bisphosphoglycerate-dependent phosphoglycerate mutase 1 (235 aa).

Residues 8–15 (RHGESVAN), 21–22 (TG), arginine 60, 87–90 (ERHY), lysine 98, and 114–115 (RR) each bind substrate. Histidine 9 (tele-phosphohistidine intermediate) is an active-site residue. The Proton donor/acceptor role is filled by glutamate 87.

The protein belongs to the phosphoglycerate mutase family. BPG-dependent PGAM subfamily.

It catalyses the reaction (2R)-2-phosphoglycerate = (2R)-3-phosphoglycerate. The protein operates within carbohydrate degradation; glycolysis; pyruvate from D-glyceraldehyde 3-phosphate: step 3/5. In terms of biological role, catalyzes the interconversion of 2-phosphoglycerate and 3-phosphoglycerate. The chain is 2,3-bisphosphoglycerate-dependent phosphoglycerate mutase 1 from Latilactobacillus sakei subsp. sakei (strain 23K) (Lactobacillus sakei subsp. sakei).